Here is a 308-residue protein sequence, read N- to C-terminus: Serine/threonine-protein phosphatase PP1 (308 aa).

Positions 64, 66, 92, and 124 each coordinate Mn(2+). The active-site Proton donor is the H125. Mn(2+) contacts are provided by H173 and H248.

It belongs to the PPP phosphatase family. PP-1 subfamily. The cofactor is Mn(2+).

The protein localises to the cytoplasm. The enzyme catalyses O-phospho-L-seryl-[protein] + H2O = L-seryl-[protein] + phosphate. It carries out the reaction O-phospho-L-threonyl-[protein] + H2O = L-threonyl-[protein] + phosphate. The protein is Serine/threonine-protein phosphatase PP1 (pph-3) of Neurospora crassa (strain ATCC 24698 / 74-OR23-1A / CBS 708.71 / DSM 1257 / FGSC 987).